The following is a 199-amino-acid chain: V-type proton ATPase subunit E (199 aa).

Belongs to the V-ATPase E subunit family.

Functionally, produces ATP from ADP in the presence of a proton gradient across the membrane. This Clostridium botulinum (strain Okra / Type B1) protein is V-type proton ATPase subunit E.